We begin with the raw amino-acid sequence, 413 residues long: Tyrosine--tRNA ligase (413 aa).

The 'HIGH' region signature appears at 59 to 68 (PTAPDIHLGH). The 'KMSKS' region motif lies at 243 to 247 (KMSKS). K246 lines the ATP pocket. Positions 351 to 411 (LAIGQLLKQA…GKRRFARVTL (61 aa)) constitute an S4 RNA-binding domain.

This sequence belongs to the class-I aminoacyl-tRNA synthetase family. TyrS type 2 subfamily. In terms of assembly, homodimer.

It localises to the cytoplasm. It catalyses the reaction tRNA(Tyr) + L-tyrosine + ATP = L-tyrosyl-tRNA(Tyr) + AMP + diphosphate + H(+). Functionally, catalyzes the attachment of tyrosine to tRNA(Tyr) in a two-step reaction: tyrosine is first activated by ATP to form Tyr-AMP and then transferred to the acceptor end of tRNA(Tyr). In Burkholderia mallei (strain ATCC 23344), this protein is Tyrosine--tRNA ligase.